A 375-amino-acid polypeptide reads, in one-letter code: MSKALLVLEDGRVFTGMPFGAIGQTLGEAVFSTGMSGYQETLTDPSYHRQIVVATAPQIGNTGWNDQDGESRDDRIWVAGYAVRDPSPCASNWRATGTLEDELVRQRIVGIAGIDTRAVVRHLRRYGSMKAGVFSGKAMIEPLNIEALVQHVRTQQSMLGADLVGEASTLDAYVVEPKGKERFTVAALDLGIKTNTPRNFARRGIRSYVLPASATFNQIADIKPHGLFLSNGPGDPATADHVVALTREVLNAGIPLFGICFGNQILGRALGLSTYKMVFGHRGINIPVIDHATGRVAVTAQNHGFALEGEAGQSFDTPFGSAVVSHTCANDGVVEGVKLADGRAFSVQYHPEAAAGPHDAEYLFDSFVELMAAQR.

Residues Met-1 to Lys-180 are CPSase. L-glutamine is bound by residues Ser-46, Gly-232, and Gly-234. A Glutamine amidotransferase type-1 domain is found at Thr-184–Arg-375. The active-site Nucleophile is Cys-260. 5 residues coordinate L-glutamine: Phe-261, Gln-264, Asn-302, Gly-304, and Phe-305. Residues His-350 and Glu-352 contribute to the active site.

The protein belongs to the CarA family. As to quaternary structure, composed of two chains; the small (or glutamine) chain promotes the hydrolysis of glutamine to ammonia, which is used by the large (or ammonia) chain to synthesize carbamoyl phosphate. Tetramer of heterodimers (alpha,beta)4.

The catalysed reaction is hydrogencarbonate + L-glutamine + 2 ATP + H2O = carbamoyl phosphate + L-glutamate + 2 ADP + phosphate + 2 H(+). It catalyses the reaction L-glutamine + H2O = L-glutamate + NH4(+). It functions in the pathway amino-acid biosynthesis; L-arginine biosynthesis; carbamoyl phosphate from bicarbonate: step 1/1. The protein operates within pyrimidine metabolism; UMP biosynthesis via de novo pathway; (S)-dihydroorotate from bicarbonate: step 1/3. Functionally, small subunit of the glutamine-dependent carbamoyl phosphate synthetase (CPSase). CPSase catalyzes the formation of carbamoyl phosphate from the ammonia moiety of glutamine, carbonate, and phosphate donated by ATP, constituting the first step of 2 biosynthetic pathways, one leading to arginine and/or urea and the other to pyrimidine nucleotides. The small subunit (glutamine amidotransferase) binds and cleaves glutamine to supply the large subunit with the substrate ammonia. The chain is Carbamoyl phosphate synthase small chain from Mycobacterium leprae (strain TN).